A 331-amino-acid polypeptide reads, in one-letter code: Outer membrane lipoprotein PM1514 (331 aa).

The first 20 residues, 1–20, serve as a signal peptide directing secretion; that stretch reads MQYFDIKKSLPVFCSLLITA. The N-palmitoyl cysteine moiety is linked to residue Cys-21. Cys-21 carries S-diacylglycerol cysteine lipidation.

Its subcellular location is the cell outer membrane. The protein resides in the cell surface. The sequence is that of Outer membrane lipoprotein PM1514 from Pasteurella multocida (strain Pm70).